A 471-amino-acid chain; its full sequence is Plasmepsin VII (471 aa).

An N-terminal signal peptide occupies residues 1–24 (MKSVYHHFAIIFFLKLFLCNCILS). Positions 96-438 (YYGKIAIGEN…DKDNLQIGFV (343 aa)) constitute a Peptidase A1 domain. Residues Asp115 and Asp325 contribute to the active site.

The protein belongs to the peptidase A1 family.

The protein resides in the cytoplasm. In Plasmodium berghei (strain Anka), this protein is Plasmepsin VII.